Here is a 68-residue protein sequence, read N- to C-terminus: uncharacterized protein (68 aa).

This is an uncharacterized protein from Escherichia coli O6:H1 (strain CFT073 / ATCC 700928 / UPEC).